The sequence spans 119 residues: Myohemerythrin-1 (119 aa).

8 residues coordinate Fe cation: His-25, His-55, Asn-58, Glu-59, His-74, His-78, His-107, and Asp-112.

The protein belongs to the hemerythrin family. Monomer. As to expression, muscle.

Myohemerythrin is an oxygen-binding protein found in the retractor muscles of certain worms. The oxygen-binding site contains two iron atoms. This is Myohemerythrin-1 from Phascolopsis gouldii (Peanut worm).